The sequence spans 333 residues: Gap junction alpha-4 protein (333 aa).

Over 1–20 (MGDWGFLEKLLDQVQEHSTV) the chain is Cytoplasmic. A helical membrane pass occupies residues 21 to 40 (VGKIWLTVLFIFRILILGLA). Residues 41–76 (GESVWGDEQSDFECNTAQPGCTNVCYDQAFPISHIR) are Extracellular-facing. Residues 77–99 (YWVLQFLFVSTPTLVYLGHVIYL) traverse the membrane as a helical segment. Topologically, residues 100–148 (SRREERLRQKEGELRALPAKDPQVERALAAVERQMAKISVAEDGRLRIR) are cytoplasmic. The helical transmembrane segment at 149–165 (GALMGTYVASVLCKSVL) threads the bilayer. The Extracellular segment spans residues 166–207 (EAGFLYGQWRLYGWTMEPVFVCQRAPCPYLVDCFVSRPTEKT). Residues 208 to 230 (IFIIFMLVVGLISLVLNLLELVH) form a helical membrane-spanning segment. The Cytoplasmic portion of the chain corresponds to 231–333 (LLCRCLSRGM…SSSASKKQYV (103 aa)). The disordered stretch occupies residues 292–333 (ANLTTEERLASSRPPLFLDPPPQNGQKPPSRPSSSASKKQYV). Residues 323–333 (PSSSASKKQYV) are compositionally biased toward low complexity.

It belongs to the connexin family. Alpha-type (group II) subfamily. In terms of assembly, a connexon is composed of a hexamer of connexins. In terms of tissue distribution, expressed in multiple organs and tissues, including heart, uterus, ovary, and blood vessel endothelium.

It is found in the cell membrane. The protein localises to the cell junction. It localises to the gap junction. Functionally, one gap junction consists of a cluster of closely packed pairs of transmembrane channels, the connexons, through which materials of low MW diffuse from one cell to a neighboring cell. The sequence is that of Gap junction alpha-4 protein (GJA4) from Homo sapiens (Human).